We begin with the raw amino-acid sequence, 302 residues long: Oxygen-dependent coproporphyrinogen-III oxidase (302 aa).

Ser-90 is a binding site for substrate. His-94 and His-104 together coordinate a divalent metal cation. His-104 serves as the catalytic Proton donor. 106–108 (NVR) is a binding site for substrate. A divalent metal cation contacts are provided by His-143 and His-173. The segment at 238–273 (YVEFNLIYDRGTIFGLQSNGRTESILLSMPPIVKWR) is important for dimerization.

Belongs to the aerobic coproporphyrinogen-III oxidase family. As to quaternary structure, homodimer. Requires a divalent metal cation as cofactor.

It localises to the cytoplasm. It carries out the reaction coproporphyrinogen III + O2 + 2 H(+) = protoporphyrinogen IX + 2 CO2 + 2 H2O. The protein operates within porphyrin-containing compound metabolism; protoporphyrin-IX biosynthesis; protoporphyrinogen-IX from coproporphyrinogen-III (O2 route): step 1/1. Its function is as follows. Involved in the heme biosynthesis. Catalyzes the aerobic oxidative decarboxylation of propionate groups of rings A and B of coproporphyrinogen-III to yield the vinyl groups in protoporphyrinogen-IX. The polypeptide is Oxygen-dependent coproporphyrinogen-III oxidase (Methylobacillus flagellatus (strain ATCC 51484 / DSM 6875 / VKM B-1610 / KT)).